The chain runs to 1257 residues: Endochitinase A (1257 aa).

The N-terminal stretch at 1 to 21 is a signal peptide; the sequence is MVFKPLTIAAAIAGLTPFVSA. One can recognise a GH18 domain in the interval 28-339; that stretch reads SNVAVYYGQG…DVIKDILVAV (312 aa). Glu-175 (proton donor) is an active-site residue. Disordered stretches follow at residues 364 to 429, 595 to 980, and 1141 to 1174; these read TPVA…STPV, TPAA…LAPI, and DALTASPSGSQPAGESSPGQSAPTAPASTAPTTT. Over residues 595–696 the composition is skewed to low complexity; it reads TPAASSSPAV…STPVRSTSSV (102 aa). A compositionally biased stretch (polar residues) spans 700-715; it reads KSSSAPVIPKPSSTVI. Over residues 716-935 the composition is skewed to low complexity; sequence ATFTSSSGSL…ASGSGAQDST (220 aa). Residue Asn-825 is glycosylated (N-linked (GlcNAc...) asparagine). Residues 940–964 show a composition bias toward polar residues; the sequence is HASTLSPSYSTPLASASGQTGSPTT. N-linked (GlcNAc...) asparagine glycosylation is present at Asn-973. The segment covering 1145 to 1154 has biased composition (polar residues); sequence ASPSGSQPAG. The segment covering 1156–1174 has biased composition (low complexity); that stretch reads SSPGQSAPTAPASTAPTTT. The GPI-anchor amidated glycine moiety is linked to residue Gly-1231. The propeptide at 1232–1257 is removed in mature form; it reads AASRVSRLQHGAGAVSAFALFLLAAI.

The protein belongs to the glycosyl hydrolase 18 family. Chitinase class III subfamily. In terms of processing, O-glycosylated.

The protein localises to the cell membrane. It localises to the secreted. Its subcellular location is the cell wall. It carries out the reaction Random endo-hydrolysis of N-acetyl-beta-D-glucosaminide (1-&gt;4)-beta-linkages in chitin and chitodextrins.. Its function is as follows. GPI-anchored chitinase involved in the degradation of chitin, a component of the cell walls of fungi and exoskeletal elements of some animals (including worms and arthropods). Required to reshape the cell wall at the sites where cell wall remodeling and/or cell wall maturation actively take place such as sites of conidia formation. This chain is Endochitinase A (ctcA), found in Aspergillus niger (strain ATCC MYA-4892 / CBS 513.88 / FGSC A1513).